The following is a 401-amino-acid chain: Enoyl-[acyl-carrier-protein] reductase [NADH] (401 aa).

NAD(+) is bound by residues 48-53 (GSSSGY), 74-75 (FE), 111-112 (DA), and 139-140 (LA). Position 225 (Tyr-225) interacts with substrate. The active-site Proton donor is the Tyr-235. NAD(+) is bound by residues Lys-244 and 273–275 (VVT).

The protein belongs to the TER reductase family. As to quaternary structure, monomer.

The enzyme catalyses a 2,3-saturated acyl-[ACP] + NAD(+) = a (2E)-enoyl-[ACP] + NADH + H(+). The protein operates within lipid metabolism; fatty acid biosynthesis. In terms of biological role, involved in the final reduction of the elongation cycle of fatty acid synthesis (FAS II). Catalyzes the reduction of a carbon-carbon double bond in an enoyl moiety that is covalently linked to an acyl carrier protein (ACP). This is Enoyl-[acyl-carrier-protein] reductase [NADH] from Shewanella putrefaciens (strain CN-32 / ATCC BAA-453).